The following is a 547-amino-acid chain: MALNKSMHPRNRYKDKPPDFAYLASKYPEFKQHVNVNLAGRVSLNFKDPCAVRALTCTLLKEDFGLTIDIPLERLIPTVPLRLNYIHWVEDLINYHDSDKTALRRGIDIGTGASCIYPLLGATLNGWYFLATEVDDICYNYAKKNVEQNNLSDLIKVVKVPQKTLLMDALKEESEIIYDFCMCNPPFFANQLEAQGVNSRNPHRSPPSSVNTGGITEIMAEGGELEFVKRIIHDSLKLKKRLRWYSCMLGKKCSLAPLKEELRLQGVPKVAHTEFYQGRTMRWALAWSFYEEVIIPNPPKKRKLEKPRKPMVFTVLESVIKLLTEKLPSGSEVPESITLVADCIKKILTDLKVQHKIVPCGRDEESLFLTAVENSWIHIRRKKRDRTRQLRELPRAPNDFLQSNKPDALHKETSDQGQNSGDPPATKESESVTQSETCVPHTSSTPESAAPALSEPMEAENSDSKPDEVCNNDEEQDLGEDMKQSCGEASSAPQGSGSPFLFKCVLNVKKENSDVLVEMHCVEGQNRDLMNQLCTYIRNQIYRLATS.

Residues 17-20 (PPDF) form an RNA-binding region. The S-adenosyl-L-methionine site is built by R82, G110, S114, E133, T164, and N184. Positions 163 to 167 (KTLLM) are K-loop. RNA-binding stretches follow at residues 199 to 211 (SRNP…SSVN), 250 to 254 (GKKCS), and 277 to 283 (QGRTMRW). The segment at 289–398 (FYEEVIIPNP…QLRELPRAPN (110 aa)) is VCR 1. A disordered region spans residues 383–473 (KRDRTRQLRE…SKPDEVCNND (91 aa)). Polar residues predominate over residues 431–447 (SVTQSETCVPHTSSTPE). The tract at residues 500-547 (FLFKCVLNVKKENSDVLVEMHCVEGQNRDLMNQLCTYIRNQIYRLATS) is VCR 2.

The protein belongs to the methyltransferase superfamily. METTL16/RlmF family.

It is found in the nucleus. It localises to the cytoplasm. The catalysed reaction is adenosine in U6 snRNA + S-adenosyl-L-methionine = N(6)-methyladenosine in U6 snRNA + S-adenosyl-L-homocysteine + H(+). It catalyses the reaction an adenosine in mRNA + S-adenosyl-L-methionine = an N(6)-methyladenosine in mRNA + S-adenosyl-L-homocysteine + H(+). Its activity is regulated as follows. Methyltransferase activity is autoinhibited by the K-loop region that blocks S-adenosyl-L-methionine-binding. Upon activation, K-loop changes conformation, allowing S-adenosyl-L-methionine-binding and subsequent methyltransferase activity. mRNA N6-adenosine-methyltransferase activity is inhibited by zinc. In terms of biological role, RNA N6-methyltransferase that methylates adenosine residues at the N(6) position of a subset of RNAs and is involved in S-adenosyl-L-methionine homeostasis by regulating expression of MAT2A transcripts. Able to N6-methylate a subset of mRNAs and U6 small nuclear RNAs (U6 snRNAs). In contrast to the METTL3-METTL14 heterodimer, only able to methylate a limited number of RNAs: requires both a 5'UACAGAGAA-3' nonamer sequence and a specific RNA structure. Plays a key role in S-adenosyl-L-methionine homeostasis by mediating N6-methylation of MAT2A mRNAs, altering splicing of MAT2A transcripts: in presence of S-adenosyl-L-methionine, binds the 3'-UTR region of MAT2A mRNA and specifically N6-methylates the first hairpin of MAT2A mRNA, impairing MAT2A splicing and protein expression. In S-adenosyl-L-methionine-limiting conditions, binds the 3'-UTR region of MAT2A mRNA but stalls due to the lack of a methyl donor, preventing N6-methylation and promoting expression of MAT2A. In addition to mRNAs, also able to mediate N6-methylation of U6 small nuclear RNA (U6 snRNA): specifically N6-methylates adenine in position 43 of U6 snRNAs. The polypeptide is RNA N(6)-adenosine-methyltransferase mettl16 (mettl16) (Xenopus laevis (African clawed frog)).